A 124-amino-acid chain; its full sequence is Fluoride-specific ion channel FluC 1 (124 aa).

4 helical membrane passes run 7-27 (IQSK…LGAI), 32-52 (LNNY…IVGL), 58-78 (IQFF…GWIL), and 93-113 (AGLI…TFWI). Positions 68 and 71 each coordinate Na(+).

This sequence belongs to the fluoride channel Fluc/FEX (TC 1.A.43) family.

The protein localises to the cell inner membrane. It catalyses the reaction fluoride(in) = fluoride(out). With respect to regulation, na(+) is not transported, but it plays an essential structural role and its presence is essential for fluoride channel function. Functionally, fluoride-specific ion channel. Important for reducing fluoride concentration in the cell, thus reducing its toxicity. The protein is Fluoride-specific ion channel FluC 1 of Prochlorococcus marinus (strain SARG / CCMP1375 / SS120).